We begin with the raw amino-acid sequence, 369 residues long: Small RNA 2'-O-methyltransferase (369 aa).

3 residues coordinate S-adenosyl-L-methionine: Ser-39, Asp-57, and Ser-93. Mg(2+)-binding residues include Glu-111, Glu-114, His-115, and His-161.

It belongs to the methyltransferase superfamily. HEN1 family. Mg(2+) serves as cofactor.

The protein localises to the cytoplasm. The enzyme catalyses small RNA 3'-end nucleotide + S-adenosyl-L-methionine = small RNA 3'-end 2'-O-methylnucleotide + S-adenosyl-L-homocysteine + H(+). Methyltransferase that adds a 2'-O-methyl group at the 3'-end of piRNAs, a class of 24 to 30 nucleotide RNAs that are generated by a Dicer-independent mechanism and are primarily derived from transposons and other repeated sequence elements. This probably protects the 3'-end of piRNAs from uridylation activity and subsequent degradation. Stabilization of piRNAs is essential for gametogenesis. This chain is Small RNA 2'-O-methyltransferase (henmt1), found in Xenopus tropicalis (Western clawed frog).